The sequence spans 141 residues: Sec-independent protein translocase protein TatB (141 aa).

A helical transmembrane segment spans residues 1 to 21 (MFGISFSELLLVGLVALLVLG). The tract at residues 74–141 (EAQKLLAPLT…SPPSETPRNP (68 aa)) is disordered. Pro residues predominate over residues 89 to 115 (QETPPPAAESPAPSVPTPPPTSTPAVP). Residues 116–129 (PADAAAPPAVAAST) are compositionally biased toward low complexity. Positions 130 to 141 (PPSPPSETPRNP) are enriched in pro residues.

Belongs to the TatB family. As to quaternary structure, the Tat system comprises two distinct complexes: a TatABC complex, containing multiple copies of TatA, TatB and TatC subunits, and a separate TatA complex, containing only TatA subunits. Substrates initially bind to the TatABC complex, which probably triggers association of the separate TatA complex to form the active translocon.

It is found in the cell inner membrane. Part of the twin-arginine translocation (Tat) system that transports large folded proteins containing a characteristic twin-arginine motif in their signal peptide across membranes. Together with TatC, TatB is part of a receptor directly interacting with Tat signal peptides. TatB may form an oligomeric binding site that transiently accommodates folded Tat precursor proteins before their translocation. The polypeptide is Sec-independent protein translocase protein TatB (Pseudomonas aeruginosa (strain ATCC 15692 / DSM 22644 / CIP 104116 / JCM 14847 / LMG 12228 / 1C / PRS 101 / PAO1)).